We begin with the raw amino-acid sequence, 48 residues long: uncharacterized protein (48 aa).

Positions 1-48 (MSRRMGGGMPKINLSGAIPNNNTSTPSTPTLRSSVSVSSSNSRGLFLA) are disordered. Residues 20–48 (NNNTSTPSTPTLRSSVSVSSSNSRGLFLA) are compositionally biased toward low complexity.

This is an uncharacterized protein from Dictyostelium discoideum (Social amoeba).